The primary structure comprises 189 residues: Small ribosomal subunit protein uS4 (189 aa).

Residues 107 to 178 (RRLQTQVFKL…AGRVKRKNQG (72 aa)) form the S4 RNA-binding domain. The disordered stretch occupies residues 160–189 (HNSPYGGGRAGRVKRKNQGKGGEEGAEEEE).

Belongs to the universal ribosomal protein uS4 family. In terms of assembly, component of the small ribosomal subunit. Mature ribosomes consist of a small (40S) and a large (60S) subunit. The 40S subunit contains about 32 different proteins and 1 molecule of RNA (18S). The 60S subunit contains 45 different proteins and 3 molecules of RNA (25S, 5.8S and 5S).

The protein localises to the cytoplasm. Its function is as follows. Component of the ribosome, a large ribonucleoprotein complex responsible for the synthesis of proteins in the cell. The small ribosomal subunit (SSU) binds messenger RNAs (mRNAs) and translates the encoded message by selecting cognate aminoacyl-transfer RNA (tRNA) molecules. The large subunit (LSU) contains the ribosomal catalytic site termed the peptidyl transferase center (PTC), which catalyzes the formation of peptide bonds, thereby polymerizing the amino acids delivered by tRNAs into a polypeptide chain. The nascent polypeptides leave the ribosome through a tunnel in the LSU and interact with protein factors that function in enzymatic processing, targeting, and the membrane insertion of nascent chains at the exit of the ribosomal tunnel. RPS9B is involved in nucleolar processing of pre-18S ribosomal RNA and ribosome assembly. In Candida albicans (strain SC5314 / ATCC MYA-2876) (Yeast), this protein is Small ribosomal subunit protein uS4 (RPS9B).